A 254-amino-acid polypeptide reads, in one-letter code: Phosphomannomutase (254 aa).

Asp-19 serves as the catalytic Nucleophile. Asp-19 and Asp-21 together coordinate Mg(2+). Asp-21 (proton donor/acceptor) is an active-site residue. Arg-28, Arg-130, Arg-141, Arg-148, Ser-186, and Asp-188 together coordinate alpha-D-mannose 1-phosphate. Residues Asp-216, Phe-228, Asp-230, and Thr-233 each contribute to the Mg(2+) site. Residue Ser-240 is modified to Phosphoserine.

Belongs to the eukaryotic PMM family. As to quaternary structure, homodimer.

Its subcellular location is the cytoplasm. It carries out the reaction alpha-D-mannose 1-phosphate = D-mannose 6-phosphate. The protein operates within nucleotide-sugar biosynthesis; GDP-alpha-D-mannose biosynthesis; alpha-D-mannose 1-phosphate from D-fructose 6-phosphate: step 2/2. Its function is as follows. Involved in the synthesis of the GDP-mannose and dolichol-phosphate-mannose required for a number of critical mannosyl transfer reactions such as folding and glycosylation of secretory proteins in the ER lumen. This Saccharomyces cerevisiae (strain ATCC 204508 / S288c) (Baker's yeast) protein is Phosphomannomutase.